An 849-amino-acid chain; its full sequence is Aminopeptidase N (849 aa).

Residues glutamate 122 and 259–263 (GAMEN) each bind substrate. Histidine 294 contacts Zn(2+). Residue glutamate 295 is the Proton acceptor of the active site. Positions 298 and 317 each coordinate Zn(2+).

The protein belongs to the peptidase M1 family. As to quaternary structure, monomer. Zn(2+) is required as a cofactor.

The protein localises to the cytoplasm. The enzyme catalyses Release of an N-terminal amino acid, Xaa-|-Yaa- from a peptide, amide or arylamide. Xaa is preferably Ala, but may be most amino acids including Pro (slow action). When a terminal hydrophobic residue is followed by a prolyl residue, the two may be released as an intact Xaa-Pro dipeptide.. Functionally, aminopeptidase with broad substrate specificity to several peptides. It has more affinity for oligopeptides than for dipeptides. It plays an essential role in the metabolism, it may be involved in nitrogen supply or protein turnover. This chain is Aminopeptidase N (pepN), found in Lactococcus lactis subsp. lactis (Streptococcus lactis).